A 257-amino-acid chain; its full sequence is MADS-box transcription factor 1 (257 aa).

In terms of domain architecture, MADS-box spans 1–61 (MGRGKVELKR…GRLFEFSSSS (61 aa)). The K-box domain occupies 85–175 (NEINYQEYLK…RKKLQETSAE (91 aa)).

In terms of assembly, may interact with the K-box of MADS6, MADS14 and MADS15.

It localises to the nucleus. In terms of biological role, probable transcription factor involved in the development of floral organs. Required for the formation of inner floral organs (lodicules, stamens and carpels, or whorls 2, 3 and 4) and the lemma and palea (whorl 1), which are grass floral organs analogous to sepals. May be involved in the control of flowering time. Seems to act as transcriptional activator. May act upstream of the auxin-responsive protein GH3.8. This Oryza sativa subsp. indica (Rice) protein is MADS-box transcription factor 1 (MADS1).